Here is a 330-residue protein sequence, read N- to C-terminus: Beta-hexosaminidase (330 aa).

Residues Asp-62, Arg-70, Arg-130, and 160–161 (KH) each bind substrate. The Proton donor/acceptor role is filled by His-173. Asp-242 serves as the catalytic Nucleophile.

It belongs to the glycosyl hydrolase 3 family. NagZ subfamily. In terms of assembly, monomer.

It is found in the cytoplasm. The catalysed reaction is Hydrolysis of terminal non-reducing N-acetyl-D-hexosamine residues in N-acetyl-beta-D-hexosaminides.. It functions in the pathway cell wall biogenesis; peptidoglycan recycling. In terms of biological role, plays a role in peptidoglycan recycling by cleaving the terminal beta-1,4-linked N-acetylglucosamine (GlcNAc) from peptide-linked peptidoglycan fragments, giving rise to free GlcNAc, anhydro-N-acetylmuramic acid and anhydro-N-acetylmuramic acid-linked peptides. Plays a role in beta-lactam antibiotic resistance via its role in generating anhydro-N-acetylmuramic acid-linked peptides; these peptides function as signaling molecules that induce high-level expression of the beta-lactamase AmpC. This Vibrio cholerae serotype O1 (strain ATCC 39315 / El Tor Inaba N16961) protein is Beta-hexosaminidase.